The chain runs to 806 residues: Phenylalanine--tRNA ligase beta subunit (806 aa).

In terms of domain architecture, tRNA-binding spans 44 to 158; the sequence is ADGLSKLVVG…EEAVPGDAIF (115 aa). Residues 411–486 enclose the B5 domain; it reads TEPVEVSTSL…RIYGYDKLPT (76 aa). Mg(2+)-binding residues include aspartate 464, aspartate 470, glutamate 473, and glutamate 474. The FDX-ACB domain occupies 713 to 806; sequence TKFPAMTRDV…LTEQVGAEVR (94 aa).

This sequence belongs to the phenylalanyl-tRNA synthetase beta subunit family. Type 1 subfamily. As to quaternary structure, tetramer of two alpha and two beta subunits. Mg(2+) is required as a cofactor.

It is found in the cytoplasm. It catalyses the reaction tRNA(Phe) + L-phenylalanine + ATP = L-phenylalanyl-tRNA(Phe) + AMP + diphosphate + H(+). The protein is Phenylalanine--tRNA ligase beta subunit of Streptococcus pyogenes serotype M28 (strain MGAS6180).